The primary structure comprises 366 residues: tRNA 2-selenouridine synthase (366 aa).

The region spanning 14 to 137 is the Rhodanese domain; that stretch reads LLENRPLIDV…IRSFLINTIE (124 aa). Residue Cys97 is the S-selanylcysteine intermediate of the active site.

This sequence belongs to the SelU family. As to quaternary structure, monomer.

It catalyses the reaction 5-methylaminomethyl-2-thiouridine(34) in tRNA + selenophosphate + (2E)-geranyl diphosphate + H2O + H(+) = 5-methylaminomethyl-2-selenouridine(34) in tRNA + (2E)-thiogeraniol + phosphate + diphosphate. It carries out the reaction 5-methylaminomethyl-2-thiouridine(34) in tRNA + (2E)-geranyl diphosphate = 5-methylaminomethyl-S-(2E)-geranyl-thiouridine(34) in tRNA + diphosphate. The enzyme catalyses 5-methylaminomethyl-S-(2E)-geranyl-thiouridine(34) in tRNA + selenophosphate + H(+) = 5-methylaminomethyl-2-(Se-phospho)selenouridine(34) in tRNA + (2E)-thiogeraniol. The catalysed reaction is 5-methylaminomethyl-2-(Se-phospho)selenouridine(34) in tRNA + H2O = 5-methylaminomethyl-2-selenouridine(34) in tRNA + phosphate. In terms of biological role, involved in the post-transcriptional modification of the uridine at the wobble position (U34) of tRNA(Lys), tRNA(Glu) and tRNA(Gln). Catalyzes the conversion of 2-thiouridine (S2U-RNA) to 2-selenouridine (Se2U-RNA). Acts in a two-step process involving geranylation of 2-thiouridine (S2U) to S-geranyl-2-thiouridine (geS2U) and subsequent selenation of the latter derivative to 2-selenouridine (Se2U) in the tRNA chain. In Shewanella frigidimarina (strain NCIMB 400), this protein is tRNA 2-selenouridine synthase.